A 1765-amino-acid polypeptide reads, in one-letter code: Sodium channel protein type 11 subunit alpha (1765 aa).

The Cytoplasmic portion of the chain corresponds to 1-126 (MEERYYPVIF…PLRSLMIRIS (126 aa)). The I repeat unit spans residues 115-403 (FNPLRSLMIR…VTMAYEEQNR (289 aa)). The helical transmembrane segment at 127-148 (VHSVFSMFIICTVIINCMFMAN) threads the bilayer. At 149-157 (SMERSFDND) the chain is on the extracellular side. Residues 158–177 (IPEYVFIGIYILEAVIKILA) form a helical membrane-spanning segment. Residues 178–189 (RGFIVDEFSFLR) are Cytoplasmic-facing. A helical membrane pass occupies residues 190–209 (DPWNWLDFIVIGTAIATCFP). Residues 210–216 (GSQVNLS) are Extracellular-facing. A glycan (N-linked (GlcNAc...) asparagine) is linked at Asn214. A helical; Voltage-sensor membrane pass occupies residues 217 to 236 (ALRTFRVFRALKAISVISGL). The Cytoplasmic segment spans residues 237–252 (KVIVGALLRSVKKLVD). A helical transmembrane segment spans residues 253–266 (VMVLTLFCLSIFAL). The Extracellular portion of the chain corresponds to 267–339 (VGQQLFMGIL…PDNNYTKFDN (73 aa)). Cys280 and Cys317 are disulfide-bonded. Residues Asn319 and Asn333 are each glycosylated (N-linked (GlcNAc...) asparagine). Residues 340–364 (FGWSFLAMFRVMTQDSWERLYRQIL) constitute an intramembrane region (pore-forming). At 365–371 (RTSGIYF) the chain is on the extracellular side. Residues 372–397 (VFFFVVVIFLGSFYLLNLTLAVVTMA) form a helical membrane-spanning segment. Residues 398–567 (YEEQNRNVAA…WLCIKKVLRT (170 aa)) are Cytoplasmic-facing. The stretch at 554-820 (CSPQWLCIKK…EGETRKTKVQ (267 aa)) is one II repeat. Residues 568–591 (IMTDPFTELAITICIIINTVFLAV) form a helical membrane-spanning segment. Over 592 to 602 (EHHNMDDNLKT) the chain is Extracellular. The helical transmembrane segment at 603-626 (ILKIGNWVFTGIFIAEMCLKIIAL) threads the bilayer. The Cytoplasmic portion of the chain corresponds to 627–634 (DPYHYFRH). Residues 635-656 (GWNVFDSIVALLSLADVLYNTL) traverse the membrane as a helical segment. The Extracellular segment spans residues 657 to 662 (SDNNRS). Asn660 is a glycosylation site (N-linked (GlcNAc...) asparagine). The chain crosses the membrane as a helical; Voltage-sensor span at residues 663-682 (FLASLRVLRVFKLAKSWPTL). The Cytoplasmic segment spans residues 683–697 (NTLIKIIGHSVGALG). A helical membrane pass occupies residues 698–720 (NLTVVLTIVVFIFSVVGMRLFGT). Residues 721-741 (KFNKTAYATQERPRRRWHMDN) are Extracellular-facing. Asn723 carries N-linked (GlcNAc...) asparagine glycosylation. The pore-forming intramembrane region spans 742-762 (FYHSFLVVFRILCGEWIENMW). The Extracellular segment spans residues 763–772 (GCMQDMDGSP). Cys764 and Cys774 are oxidised to a cystine. A helical membrane pass occupies residues 773-798 (LCIIVFVLIMVIGKLVVLNLFIALLL). Residues 799–1029 (NSFSNEEKDG…WWNIRKTCYQ (231 aa)) are Cytoplasmic-facing. The stretch at 1022–1319 (NIRKTCYQIV…KKYYNAMKKL (298 aa)) is one III repeat. A helical transmembrane segment spans residues 1030–1052 (IVKHSWFESFIIFVILLSSGALI). Topologically, residues 1053–1066 (FEDVNLPSRPQVEK) are extracellular. The helical transmembrane segment at 1067-1092 (LLRCTDNIFTFIFLLEMILKWVAFGF) threads the bilayer. The Cytoplasmic portion of the chain corresponds to 1093-1098 (RRYFTS). Residues 1099 to 1116 (AWCWLDFLIVVVSVLSLM) traverse the membrane as a helical segment. A topological domain (extracellular) is located at residue Asn1117. The chain crosses the membrane as a helical; Voltage-sensor span at residues 1118–1139 (LPSLKSFRTLRALRPLRALSQF). Residues 1140–1158 (EGMKVVVYALISAIPAILN) are Cytoplasmic-facing. The helical transmembrane segment at 1159 to 1180 (VLLVCLIFWLVFCILGVNLFSG) threads the bilayer. Over 1181–1223 (KFGRCINGTDINMYLDFTEVPNRSQCNISNYSWKVPQVNFDNV) the chain is Extracellular. N-linked (GlcNAc...) asparagine glycosylation is found at Asn1187, Asn1202, Asn1207, and Asn1210. Residues 1224 to 1245 (GNAYLALLQVATYKGWLEIMNA) constitute an intramembrane region (pore-forming). Residues 1246 to 1261 (AVDSREKDEQPDFEAN) lie on the Extracellular side of the membrane. Residues 1262-1288 (LYAYLYFVVFIIFGSFFTLNLFIGVII) form a helical membrane-spanning segment. The Cytoplasmic segment spans residues 1289–1341 (DNFNQQQKKLGGQDIFMTEEQKKYYNAMKKLGTKKPQKPIPRPLNKCQAFVFD). An IV repeat occupies 1328–1619 (IPRPLNKCQA…WEKFDPEASQ (292 aa)). The helical transmembrane segment at 1342–1365 (LVTSQVFDVIILGLIVLNMIIMMA) threads the bilayer. Residues 1366 to 1376 (ESADQPKDVKK) are Extracellular-facing. Residues 1377–1400 (TFDILNIAFVVIFTIECLIKVFAL) traverse the membrane as a helical segment. The Cytoplasmic portion of the chain corresponds to 1401–1406 (RQHYFT). A helical transmembrane segment spans residues 1407–1430 (NGWNLFDCVVVVLSIISTLVSRLE). Over 1431 to 1440 (DSDISFPPTL) the chain is Extracellular. The chain crosses the membrane as a helical; Voltage-sensor span at residues 1441 to 1463 (FRVVRLARIGRILRLVRAARGIR). Residues 1464-1478 (TLLFALMMSLPSLFN) are Cytoplasmic-facing. A helical membrane pass occupies residues 1479–1501 (IGLLLFLVMFIYAIFGMSWFSKV). Residues 1502-1515 (KKGSGIDDIFNFET) are Extracellular-facing. Residues 1516 to 1538 (FTGSMLCLFQITTSAGWDTLLNP) constitute an intramembrane region (pore-forming). Topologically, residues 1539–1559 (MLEAKEHCNSSSQDSCQQPQI) are extracellular. Residue Asn1547 is glycosylated (N-linked (GlcNAc...) asparagine). A helical transmembrane segment spans residues 1560–1584 (AVVYFVSYIIISFLIVVNMYIAVIL). The Cytoplasmic portion of the chain corresponds to 1585-1765 (ENFNTATEES…DVAKVKVHND (181 aa)).

Belongs to the sodium channel (TC 1.A.1.10) family. Nav1.9/SCN11A subfamily. In terms of assembly, the voltage-resistant sodium channel consists of an ion conducting pore forming alpha-subunit regulated by one or more auxiliary subunits SCN1B, SCN2B and SCN3B. In terms of tissue distribution, expressed (at protein level) in myenteric sensory neurons. Expressed in small sensory neurons of the dorsal root ganglia (C-fiber neurons) and trigeminal ganglia.

The protein resides in the cell membrane. The enzyme catalyses Na(+)(in) = Na(+)(out). With respect to regulation, activity is not sensitive to inhibition by tetrodotoxin. Sodium channel mediating the voltage-dependent sodium ion permeability of excitable membranes. Assuming opened or closed conformations in response to the voltage difference across the membrane, the protein forms a sodium-selective channel through which sodium ions may pass in accordance with their electrochemical gradient. Involved in membrane depolarization during action potential in nociceptors which function as key relay stations for the electrical transmission of pain signals from the periphery to the central nervous system. Also involved in rapid BDNF-evoked neuronal depolarization. The polypeptide is Sodium channel protein type 11 subunit alpha (Rattus norvegicus (Rat)).